We begin with the raw amino-acid sequence, 609 residues long: Glutamine--fructose-6-phosphate aminotransferase [isomerizing] (609 aa).

The Nucleophile; for GATase activity role is filled by Cys2. Residues 2-219 form the Glutamine amidotransferase type-2 domain; it reads CGIFGYIGAK…SGELAVVGLG (218 aa). SIS domains follow at residues 280-426 and 458-599; these read ISEK…LKQT and WAND…IDRP. Lys604 acts as the For Fru-6P isomerization activity in catalysis.

In terms of assembly, homodimer.

The protein resides in the cytoplasm. It carries out the reaction D-fructose 6-phosphate + L-glutamine = D-glucosamine 6-phosphate + L-glutamate. Catalyzes the first step in hexosamine metabolism, converting fructose-6P into glucosamine-6P using glutamine as a nitrogen source. The sequence is that of Glutamine--fructose-6-phosphate aminotransferase [isomerizing] from Chlamydia caviae (strain ATCC VR-813 / DSM 19441 / 03DC25 / GPIC) (Chlamydophila caviae).